The sequence spans 90 residues: Small ribosomal subunit protein uS17 (90 aa).

This sequence belongs to the universal ribosomal protein uS17 family. As to quaternary structure, part of the 30S ribosomal subunit.

Functionally, one of the primary rRNA binding proteins, it binds specifically to the 5'-end of 16S ribosomal RNA. The polypeptide is Small ribosomal subunit protein uS17 (Dehalococcoides mccartyi (strain ATCC BAA-2100 / JCM 16839 / KCTC 5957 / BAV1)).